The following is a 204-amino-acid chain: Large ribosomal subunit protein uL4 (204 aa).

The disordered stretch occupies residues 49 to 90; it reads KVKGMGEVSGTTKKPYRQKGTGSARQGSLRAPQYRTGGAVHG.

Belongs to the universal ribosomal protein uL4 family. Part of the 50S ribosomal subunit.

One of the primary rRNA binding proteins, this protein initially binds near the 5'-end of the 23S rRNA. It is important during the early stages of 50S assembly. It makes multiple contacts with different domains of the 23S rRNA in the assembled 50S subunit and ribosome. In terms of biological role, forms part of the polypeptide exit tunnel. This chain is Large ribosomal subunit protein uL4, found in Gluconacetobacter diazotrophicus (strain ATCC 49037 / DSM 5601 / CCUG 37298 / CIP 103539 / LMG 7603 / PAl5).